Here is a 1574-residue protein sequence, read N- to C-terminus: Myosin-2 (1574 aa).

Ser-2 is modified (N-acetylserine). A Myosin N-terminal SH3-like domain is found at 4–57; sequence EVGTRCWYPHKELGWIGAEVIKNEFNDGKYHLELQLEDDEIVSVDTKDLNNDKD. A Myosin motor domain is found at 70-781; it reads EATEDLTSLS…MLAYLEKLRS (712 aa). Residue 164-171 participates in ATP binding; it reads GESGAGKT. Residues 443 to 523 are actin-binding; sequence FIGVLDIYGF…LGILSLLDEE (81 aa). IQ domains are found at residues 784 to 806, 807 to 831, 832 to 855, 856 to 879, 880 to 902, and 903 to 932; these read MHNSIVMIQKKIRAKYYRKQYLQ, ISQAIKYLQNNIKGFIIRQRVNDEM, KVNCATLLQAAYRGHSIRANVFSV, LRTITNLQKKIRKELKQRQLKQEH, EYNAAVTIQSKVRTFEPRSRFLR, and TKKDTVVVQSLIRRRAAQRKLKQLKADAKS. A coiled-coil region spans residues 933 to 1088; that stretch reads VNHLKEVSYK…RLQTAMSLGT (156 aa). A non alpha-helical, tail domain region spans residues 1087-1574; that stretch reads GTVTTSVLPQ…VAQQVVQDGH (488 aa). Thr-1097 carries the phosphothreonine modification. At Ser-1121 the chain carries Phosphoserine. The Dilute domain occupies 1226–1501; it reads AQVLTTIQKV…LRYVADIVKK (276 aa).

It belongs to the TRAFAC class myosin-kinesin ATPase superfamily. Myosin family. Homodimer. Interacts with calmodulin (CMD1) and the myosin light chain MLC1 through its IQ repeats. Binds to the membrane receptors SEC4 and VAC17 to transport secretory vesicles and the vacuole, respectively. Binds to KAR9, which transports BIM1-coated cytoplasmic microtubules that are attached to the spindle pole body into the emerging bud, thereby correctly orienting the mitotic spindle. Interacts with YPT11 and MMR1 to accelerate mitochondrial distribution to the bud. Interacts with SHE4 and localizes it to the bud tip. Interacts with RHO3 and SMY1, putative regulators of MYO2 function. Interacts with SRO7.

Its subcellular location is the bud neck. It is found in the bud tip. Its function is as follows. Myosin heavy chain that is required for the cell cycle-regulated transport of various organelles and proteins for their segregation. Functions by binding with its tail domain to receptor proteins on organelles and exerting force with its N-terminal motor domain against actin filaments, thereby transporting its cargo along polarized actin cables. Essential for the delivery of secretory vesicles to sites of active growth during bud emergence and cytokinesis. Required for segregation and inheritance of peroxisomes, late Golgi compartments, mitochondria and the vacuole to the daughter cell during cell division. Also required for correct alignment of the spindle during mitosis. This chain is Myosin-2 (MYO2), found in Saccharomyces cerevisiae (strain ATCC 204508 / S288c) (Baker's yeast).